The following is a 188-amino-acid chain: Elongation factor P (188 aa).

It belongs to the elongation factor P family.

The protein resides in the cytoplasm. It functions in the pathway protein biosynthesis; polypeptide chain elongation. Its function is as follows. Involved in peptide bond synthesis. Stimulates efficient translation and peptide-bond synthesis on native or reconstituted 70S ribosomes in vitro. Probably functions indirectly by altering the affinity of the ribosome for aminoacyl-tRNA, thus increasing their reactivity as acceptors for peptidyl transferase. The protein is Elongation factor P of Saccharopolyspora erythraea (strain ATCC 11635 / DSM 40517 / JCM 4748 / NBRC 13426 / NCIMB 8594 / NRRL 2338).